A 155-amino-acid polypeptide reads, in one-letter code: Protein FAM162A (155 aa).

Residues 77-103 (RFKKEEEIPETISFEMLDAAKNKLRVK) form a required for proapoptotic activity region. The chain crosses the membrane as a helical span at residues 104 to 121 (VSYLMIALTVAGCIYMVI).

This sequence belongs to the UPF0389 family. In terms of assembly, interacts with HSP90AB1; HSP90AB1 is essential for FAM162A mitochondrial localization and pro-apoptotic activity. Interacts with VDAC2; the interaction is probably involved in inducing mitochondrial permeability transition.

It is found in the mitochondrion membrane. Its function is as follows. Proposed to be involved in regulation of apoptosis; the exact mechanism may differ between cell types/tissues. May be involved in hypoxia-induced cell death of transformed cells implicating cytochrome C release and caspase activation (such as CASP9) and inducing mitochondrial permeability transition. May be involved in hypoxia-induced cell death of neuronal cells probably by promoting release of AIFM1 from mitochondria to cytoplasm and its translocation to the nucleus; however, the involvement of caspases has been reported conflictingly. The polypeptide is Protein FAM162A (Fam162a) (Mus musculus (Mouse)).